A 173-amino-acid chain; its full sequence is Crossover junction endodeoxyribonuclease RuvC (173 aa).

Residues D8, E67, and D139 contribute to the active site. Residues D8, E67, and D139 each coordinate Mg(2+).

Belongs to the RuvC family. In terms of assembly, homodimer which binds Holliday junction (HJ) DNA. The HJ becomes 2-fold symmetrical on binding to RuvC with unstacked arms; it has a different conformation from HJ DNA in complex with RuvA. In the full resolvosome a probable DNA-RuvA(4)-RuvB(12)-RuvC(2) complex forms which resolves the HJ. The cofactor is Mg(2+).

The protein localises to the cytoplasm. It carries out the reaction Endonucleolytic cleavage at a junction such as a reciprocal single-stranded crossover between two homologous DNA duplexes (Holliday junction).. Functionally, the RuvA-RuvB-RuvC complex processes Holliday junction (HJ) DNA during genetic recombination and DNA repair. Endonuclease that resolves HJ intermediates. Cleaves cruciform DNA by making single-stranded nicks across the HJ at symmetrical positions within the homologous arms, yielding a 5'-phosphate and a 3'-hydroxyl group; requires a central core of homology in the junction. The consensus cleavage sequence is 5'-(A/T)TT(C/G)-3'. Cleavage occurs on the 3'-side of the TT dinucleotide at the point of strand exchange. HJ branch migration catalyzed by RuvA-RuvB allows RuvC to scan DNA until it finds its consensus sequence, where it cleaves and resolves the cruciform DNA. The sequence is that of Crossover junction endodeoxyribonuclease RuvC from Pectobacterium carotovorum subsp. carotovorum (strain PC1).